Here is a 264-residue protein sequence, read N- to C-terminus: Small ribosomal subunit protein eS1 (264 aa).

Residues 232 to 264 (HGEGGGSGKPSGDETGAKVERADGYEPPVQESV) form a disordered region. Residues 242–255 (SGDETGAKVERADG) show a composition bias toward basic and acidic residues.

This sequence belongs to the eukaryotic ribosomal protein eS1 family. As to quaternary structure, component of the small ribosomal subunit. Mature ribosomes consist of a small (40S) and a large (60S) subunit. The 40S subunit contains about 33 different proteins and 1 molecule of RNA (18S). The 60S subunit contains about 49 different proteins and 3 molecules of RNA (28S, 5.8S and 5S). Part of the small subunit (SSU) processome, composed of more than 70 proteins and the RNA chaperone small nucleolar RNA (snoRNA) U3.

The protein localises to the cytoplasm. It localises to the nucleus. The protein resides in the nucleolus. Component of the small ribosomal subunit. The ribosome is a large ribonucleoprotein complex responsible for the synthesis of proteins in the cell. Part of the small subunit (SSU) processome, first precursor of the small eukaryotic ribosomal subunit. During the assembly of the SSU processome in the nucleolus, many ribosome biogenesis factors, an RNA chaperone and ribosomal proteins associate with the nascent pre-rRNA and work in concert to generate RNA folding, modifications, rearrangements and cleavage as well as targeted degradation of pre-ribosomal RNA by the RNA exosome. May play a role during erythropoiesis. This chain is Small ribosomal subunit protein eS1, found in Ophiophagus hannah (King cobra).